The chain runs to 170 residues: MIRSIIKSSNNLLKSNVAINSNKRFFATEASATSDLLTFSLLSPHQTIYKDKKAQLVTLPGAKGIFGVAKNHVPRIAELKPGVIQINHENGDLEKFFISGGFAFVNPDASCYINTIEAVPIDQLDAEEVKNGLARYTQLYNDAQEENAKAVALIGLETYQQMAFACGVSA.

Residues 1–33 (MIRSIIKSSNNLLKSNVAINSNKRFFATEASAT) constitute a mitochondrion transit peptide.

Belongs to the ATPase epsilon chain family. In terms of assembly, component of the ATP synthase complex composed at least of ATP5F1A/subunit alpha, ATP5F1B/subunit beta, ATP5MC1/subunit c (homooctomer), MT-ATP6/subunit a, MT-ATP8/subunit 8, ATP5ME/subunit e, ATP5MF/subunit f, ATP5MG/subunit g, ATP5MK/subunit k, ATP5MJ/subunit j, ATP5F1C/subunit gamma, ATP5F1D/subunit delta, ATP5F1E/subunit epsilon, ATP5PF/subunit F6, ATP5PB/subunit b, ATP5PD/subunit d, ATP5PO/subunit OSCP. ATP synthase complex consists of a soluble F(1) head domain (subunits alpha(3) and beta(3)) - the catalytic core - and a membrane F(0) domain - the membrane proton channel (subunits c, a, 8, e, f, g, k and j). These two domains are linked by a central stalk (subunits gamma, delta, and epsilon) rotating inside the F1 region and a stationary peripheral stalk (subunits F6, b, d, and OSCP).

It is found in the mitochondrion. Its subcellular location is the mitochondrion inner membrane. Its function is as follows. Subunit delta, of the mitochondrial membrane ATP synthase complex (F(1)F(0) ATP synthase or Complex V) that produces ATP from ADP in the presence of a proton gradient across the membrane which is generated by electron transport complexes of the respiratory chain. ATP synthase complex consist of a soluble F(1) head domain - the catalytic core - and a membrane F(1) domain - the membrane proton channel. These two domains are linked by a central stalk rotating inside the F(1) region and a stationary peripheral stalk. During catalysis, ATP synthesis in the catalytic domain of F(1) is coupled via a rotary mechanism of the central stalk subunits to proton translocation. In vivo, can only synthesize ATP although its ATP hydrolase activity can be activated artificially in vitro. With the central stalk subunit gamma, is essential for the biogenesis of F(1) catalytic part of the ATP synthase complex namely in the formation of F1 assembly intermediate. This is ATP synthase F(1) complex subunit delta, mitochondrial from Dictyostelium discoideum (Social amoeba).